We begin with the raw amino-acid sequence, 417 residues long: Biofilm dispersion protein BdlA (417 aa).

One can recognise a PAS 1 domain in the interval 1–66 (MAALDRSMAR…RRFWERLRRG (66 aa)). Positions 67–114 (EHFSGRCKRITREGRPLWLEATYNPVRDGQGRLLKVVKYASDIDAIVH) constitute a PAC 1 domain. The PAS 2 domain maps to 115-188 (QEHEMQSKLD…ADLWRRLNRG (74 aa)). The 51-residue stretch at 191-241 (VTGQFRRVHRNGQPVWLEASYNPVYDADGKLYKVVKFASDVSDRMRRYQAE) folds into the PAC 2 domain. The Methyl-accepting transducer domain maps to 242–417 (ADNAHQAHTL…QFSRTLNADL (176 aa)).

Functionally, essential for biofilm dispersion by sensing environmental cues. May be involved in sensing and transducing signals within cells, resulting in the modulation of c-di-GMP levels, swimming motility and adhesiveness of the bacterial cell surface. The chain is Biofilm dispersion protein BdlA (bdlA) from Pseudomonas aeruginosa (strain ATCC 15692 / DSM 22644 / CIP 104116 / JCM 14847 / LMG 12228 / 1C / PRS 101 / PAO1).